We begin with the raw amino-acid sequence, 261 residues long: Small ribosomal subunit protein uS2 (261 aa).

S2 bears the N-acetylserine mark. Positions 212-261 (QNAAEEAKAEETEEAPAAEAETEWTGETDDVDWADSGATPAAEDAAASNW) are disordered. A compositionally biased stretch (acidic residues) spans 222–244 (ETEEAPAAEAETEWTGETDDVDW).

This sequence belongs to the universal ribosomal protein uS2 family. In terms of assembly, component of the small ribosomal subunit. Mature ribosomes consist of a small (40S) and a large (60S) subunit. The 40S subunit contains about 33 different proteins and 1 molecule of RNA (18S). The 60S subunit contains about 49 different proteins and 3 molecules of RNA (25S, 5.8S and 5S). Interacts with RPS21.

The protein localises to the cytoplasm. Its function is as follows. Required for the assembly and/or stability of the 40S ribosomal subunit. Required for the processing of the 20S rRNA-precursor to mature 18S rRNA in a late step of the maturation of 40S ribosomal subunits. In Candida tropicalis (Yeast), this protein is Small ribosomal subunit protein uS2.